Consider the following 364-residue polypeptide: tRNA 2-selenouridine synthase (364 aa).

The region spanning 14 to 137 (LIADTPIIDV…LRQTTIQATI (124 aa)) is the Rhodanese domain. The active-site S-selanylcysteine intermediate is Cys-97.

It belongs to the SelU family. In terms of assembly, monomer.

The catalysed reaction is 5-methylaminomethyl-2-thiouridine(34) in tRNA + selenophosphate + (2E)-geranyl diphosphate + H2O + H(+) = 5-methylaminomethyl-2-selenouridine(34) in tRNA + (2E)-thiogeraniol + phosphate + diphosphate. The enzyme catalyses 5-methylaminomethyl-2-thiouridine(34) in tRNA + (2E)-geranyl diphosphate = 5-methylaminomethyl-S-(2E)-geranyl-thiouridine(34) in tRNA + diphosphate. It carries out the reaction 5-methylaminomethyl-S-(2E)-geranyl-thiouridine(34) in tRNA + selenophosphate + H(+) = 5-methylaminomethyl-2-(Se-phospho)selenouridine(34) in tRNA + (2E)-thiogeraniol. It catalyses the reaction 5-methylaminomethyl-2-(Se-phospho)selenouridine(34) in tRNA + H2O = 5-methylaminomethyl-2-selenouridine(34) in tRNA + phosphate. Functionally, involved in the post-transcriptional modification of the uridine at the wobble position (U34) of tRNA(Lys), tRNA(Glu) and tRNA(Gln). Catalyzes the conversion of 2-thiouridine (S2U-RNA) to 2-selenouridine (Se2U-RNA). Acts in a two-step process involving geranylation of 2-thiouridine (S2U) to S-geranyl-2-thiouridine (geS2U) and subsequent selenation of the latter derivative to 2-selenouridine (Se2U) in the tRNA chain. The sequence is that of tRNA 2-selenouridine synthase from Escherichia coli O139:H28 (strain E24377A / ETEC).